The following is a 248-amino-acid chain: tRNA1(Val) (adenine(37)-N6)-methyltransferase (248 aa).

This sequence belongs to the methyltransferase superfamily. tRNA (adenine-N(6)-)-methyltransferase family.

It localises to the cytoplasm. The enzyme catalyses adenosine(37) in tRNA1(Val) + S-adenosyl-L-methionine = N(6)-methyladenosine(37) in tRNA1(Val) + S-adenosyl-L-homocysteine + H(+). In terms of biological role, specifically methylates the adenine in position 37 of tRNA(1)(Val) (anticodon cmo5UAC). This is tRNA1(Val) (adenine(37)-N6)-methyltransferase from Yersinia pseudotuberculosis serotype O:1b (strain IP 31758).